The sequence spans 982 residues: Ubiquitin carboxyl-terminal hydrolase 15 (982 aa).

The DUSP domain maps to 7-118 (VDLETQRSEV…SQQPIARKVV (112 aa)). Residues 288–933 (CGLSNLGNTC…AAYVLFYQRQ (646 aa)) enclose the USP domain. Cys-297 (nucleophile) is an active-site residue. A disordered region spans residues 623–695 (TEENDGSLHC…DNDSENGLCT (73 aa)). A compositionally biased stretch (acidic residues) spans 655–672 (METDEPDDESSQDQELPS). His-891 acts as the Proton acceptor in catalysis. A disordered region spans residues 950-982 (QGASAATGAPHESDEESNEDENDIENENCMHTN). The span at 962–975 (SDEESNEDENDIEN) shows a compositional bias: acidic residues.

This sequence belongs to the peptidase C19 family.

It is found in the cytoplasm. The protein localises to the nucleus. It carries out the reaction Thiol-dependent hydrolysis of ester, thioester, amide, peptide and isopeptide bonds formed by the C-terminal Gly of ubiquitin (a 76-residue protein attached to proteins as an intracellular targeting signal).. Its function is as follows. Hydrolase that removes conjugated ubiquitin from target proteins and regulates various pathways such as the TGF-beta receptor signaling and NF-kappa-B pathways. Acts as a key regulator of TGF-beta receptor signaling pathway, but the precise mechanism is still unclear: according to a report, acts by promoting deubiquitination of monoubiquitinated R-SMADs, thereby alleviating inhibition of R-SMADs and promoting activation of TGF-beta target genes. According to another reports, regulates the TGF-beta receptor signaling pathway by mediating deubiquitination and stabilization of tgfbr1, leading to an enhanced TGF-beta signal. May also regulate gene expression and/or DNA repair through the deubiquitination of histone H2B. Involved in endosome organization by mediating deubiquitination of rnf26 target(s), releasing vesicles that are restrained in the perinuclear region. This is Ubiquitin carboxyl-terminal hydrolase 15 (usp15) from Xenopus tropicalis (Western clawed frog).